Consider the following 134-residue polypeptide: Large ribosomal subunit protein uL16c (134 aa).

It belongs to the universal ribosomal protein uL16 family. In terms of assembly, part of the 50S ribosomal subunit.

Its subcellular location is the plastid. It localises to the chloroplast. This is Large ribosomal subunit protein uL16c from Guillardia theta (Cryptophyte).